Consider the following 460-residue polypeptide: Probable asparagine--tRNA ligase, mitochondrial (460 aa).

It belongs to the class-II aminoacyl-tRNA synthetase family.

Its subcellular location is the mitochondrion matrix. It catalyses the reaction tRNA(Asn) + L-asparagine + ATP = L-asparaginyl-tRNA(Asn) + AMP + diphosphate + H(+). The protein is Probable asparagine--tRNA ligase, mitochondrial (asnS2) of Dictyostelium discoideum (Social amoeba).